The chain runs to 324 residues: Nucleotide-binding protein GbCGDNIH1_0395 (324 aa).

14–21 (GLSGAGKS) is an ATP binding site. GTP is bound at residue 59-62 (DARS). The tract at residues 286-324 (ISDDAPQAGAARVSTDDRNGRPEEHGSAQAPDELSRTTS) is disordered. Positions 299–311 (STDDRNGRPEEHG) are enriched in basic and acidic residues.

Belongs to the RapZ-like family.

Displays ATPase and GTPase activities. The sequence is that of Nucleotide-binding protein GbCGDNIH1_0395 from Granulibacter bethesdensis (strain ATCC BAA-1260 / CGDNIH1).